The chain runs to 551 residues: Lysine--tRNA ligase (551 aa).

Positions 54 to 62 (PSGLPHIGT) match the 'HIGH' region motif. A 'KMSKS' region motif is present at residues 303–307 (KISKS). ATP is bound at residue K306.

Belongs to the class-I aminoacyl-tRNA synthetase family.

Its subcellular location is the cytoplasm. It catalyses the reaction tRNA(Lys) + L-lysine + ATP = L-lysyl-tRNA(Lys) + AMP + diphosphate. The sequence is that of Lysine--tRNA ligase from Brucella melitensis biotype 1 (strain ATCC 23456 / CCUG 17765 / NCTC 10094 / 16M).